We begin with the raw amino-acid sequence, 467 residues long: Ribosomal RNA small subunit methyltransferase F (467 aa).

S-adenosyl-L-methionine is bound by residues 119 to 125 (ASAPGSK), Glu-143, Asp-170, and Asp-188. Residue Cys-241 is the Nucleophile of the active site.

It belongs to the class I-like SAM-binding methyltransferase superfamily. RsmB/NOP family.

The protein localises to the cytoplasm. It catalyses the reaction cytidine(1407) in 16S rRNA + S-adenosyl-L-methionine = 5-methylcytidine(1407) in 16S rRNA + S-adenosyl-L-homocysteine + H(+). Its function is as follows. Specifically methylates the cytosine at position 1407 (m5C1407) of 16S rRNA. The polypeptide is Ribosomal RNA small subunit methyltransferase F (Shewanella amazonensis (strain ATCC BAA-1098 / SB2B)).